The primary structure comprises 201 residues: 3-isopropylmalate dehydratase small subunit (201 aa).

It belongs to the LeuD family. LeuD type 1 subfamily. Heterodimer of LeuC and LeuD.

The enzyme catalyses (2R,3S)-3-isopropylmalate = (2S)-2-isopropylmalate. The protein operates within amino-acid biosynthesis; L-leucine biosynthesis; L-leucine from 3-methyl-2-oxobutanoate: step 2/4. In terms of biological role, catalyzes the isomerization between 2-isopropylmalate and 3-isopropylmalate, via the formation of 2-isopropylmaleate. The protein is 3-isopropylmalate dehydratase small subunit of Mesorhizobium japonicum (strain LMG 29417 / CECT 9101 / MAFF 303099) (Mesorhizobium loti (strain MAFF 303099)).